Reading from the N-terminus, the 585-residue chain is Epithelial sodium channel subunit gamma (585 aa).

At 1–55 (MAPGEKIKAKIKKNLPVTGPQAPTIKELMRWYCLNTNTHGCRRIVVSRGRLRRLL) the chain is on the cytoplasmic side. The chain crosses the membrane as a helical span at residues 56–76 (WIGFTLTAVALILWQCALLVF). At 77–477 (SFYTVSVSIK…GGQLGLWMSC (401 aa)) the chain is on the extracellular side. Cystine bridges form between Cys-100/Cys-219, Cys-308/Cys-393, Cys-330/Cys-389, Cys-334/Cys-385, Cys-343/Cys-370, and Cys-345/Cys-359. An N-linked (GlcNAc...) asparagine glycan is attached at Asn-207. An N-linked (GlcNAc...) asparagine glycan is attached at Asn-433. The chain crosses the membrane as a helical span at residues 478–498 (SVVCVIEIIEVFFIDFFSIIA). At 499–585 (RRQWQKAKEW…LTDTQMLDEL (87 aa)) the chain is on the cytoplasmic side. Residues 513 to 534 (QAPPCPEAPRSPQGQDNPALDI) are disordered. The PY motif; recruits WW domain-containing proteins and is thereby required for ubiquitination and inhibition of the channel by NEDD4 and NEDD4L signature appears at 559–563 (PPPKY).

This sequence belongs to the amiloride-sensitive sodium channel (TC 1.A.6) family. SCNN1G subfamily. As to quaternary structure, component of the heterotrimeric epithelial sodium channel (ENaC) composed of an alpha/SCNN1A, a beta/SCNN1B and a gamma/SCNN1G subunit. An additional delta/SCNN1D subunit can replace the alpha/SCNN1A subunit to form an alternative channel with specific properties. Interacts with WWP1 (via WW domains). Interacts with WWP2 (via WW domains); inhibits the channel. Interacts with the full-length immature form of PCSK9 (pro-PCSK9); inhibits ENaC by promoting its proteasomal degradation. Interacts with BPIFA1; the interaction is indirect via SCNN1B and inhibits the proteolytic maturation of SCNN1A and SCNN1G and the activation of ENaC. Post-translationally, phosphorylated on serine and threonine residues. Aldosterone and insulin increase the basal level of phosphorylation. In terms of processing, ubiquitinated. Can be ubiquitinated at multiple sites and undergo monoubiquitination and polyubiquitination. Ubiquitination by NEDD4 or NEDD4L inhibits the ENaC channel through endocytosis, intracellular retention and degradation of its individual subunits. ENaC is activated through the proteolytic maturation of its subunits. Furin cleaves the SCNN1G subunit first, followed by cleavage by prostasin (PRSS8), which results in a stepwise increase in the open probability of the channel due to the release of an inhibitory tract. BPIFA1, which is recruited by the SCNN1B subunit, prevents the proteolytic activation of ENaC. Post-translationally, N-glycosylated. N-linked glycans are processed to complex type during ENaC complex assembly and transport to the plasma membrane.

The protein resides in the apical cell membrane. The enzyme catalyses Na(+)(in) = Na(+)(out). Its activity is regulated as follows. Originally identified and characterized by its inhibition by the diuretic drug amiloride. Its function is as follows. This is one of the three pore-forming subunits of the heterotrimeric epithelial sodium channel (ENaC), a critical regulator of sodium balance and fluid homeostasis. ENaC operates in epithelial tissues, where it mediates the electrodiffusion of sodium ions from extracellular fluid through the apical membrane of cells, with water following osmotically. It plays a key role in maintaining sodium homeostasis through electrogenic sodium reabsorption in the kidneys. Additionally, ENaC is essential for airway surface liquid homeostasis, which is crucial for proper mucus clearance. This Pan troglodytes (Chimpanzee) protein is Epithelial sodium channel subunit gamma.